Consider the following 233-residue polypeptide: Octanoyltransferase (233 aa).

The region spanning 34–214 (GQAPSTVLLL…EFSAREATLI (181 aa)) is the BPL/LPL catalytic domain. Substrate is bound by residues 72–79 (RGGKLTWH), 144–146 (AIG), and 157–159 (GFS). C175 (acyl-thioester intermediate) is an active-site residue.

Belongs to the LipB family.

Its subcellular location is the cytoplasm. It catalyses the reaction octanoyl-[ACP] + L-lysyl-[protein] = N(6)-octanoyl-L-lysyl-[protein] + holo-[ACP] + H(+). It functions in the pathway protein modification; protein lipoylation via endogenous pathway; protein N(6)-(lipoyl)lysine from octanoyl-[acyl-carrier-protein]: step 1/2. Catalyzes the transfer of endogenously produced octanoic acid from octanoyl-acyl-carrier-protein onto the lipoyl domains of lipoate-dependent enzymes. Lipoyl-ACP can also act as a substrate although octanoyl-ACP is likely to be the physiological substrate. This chain is Octanoyltransferase, found in Renibacterium salmoninarum (strain ATCC 33209 / DSM 20767 / JCM 11484 / NBRC 15589 / NCIMB 2235).